The sequence spans 79 residues: MRVLFIIAVLALISVGCYASEMKDRSSRNEVLSAIFAIEEPQERDCLGLFWICNYMDDKCCPGYKCERSSPWCKIDIWG.

A signal peptide spans 1 to 19; the sequence is MRVLFIIAVLALISVGCYA. Residues 20–44 constitute a propeptide that is removed on maturation; it reads SEMKDRSSRNEVLSAIFAIEEPQER. Cystine bridges form between C46–C61, C53–C66, and C60–C73. W78 carries the post-translational modification Tryptophan amide.

This sequence belongs to the neurotoxin 10 (Hwtx-1) family. 35 (Jztx-27) subfamily. As to expression, expressed by the venom gland.

The protein resides in the secreted. Functionally, probable ion channel inhibitor. The chain is U24-theraphotoxin-Cg1a from Chilobrachys guangxiensis (Chinese earth tiger tarantula).